The primary structure comprises 443 residues: Glutamate--tRNA ligase 1 (443 aa).

Residues 7-17 carry the 'HIGH' region motif; that stretch reads PSPTGYLHVGN. Positions 236–240 match the 'KMSKS' region motif; the sequence is KISKR. Lys239 is a binding site for ATP.

It belongs to the class-I aminoacyl-tRNA synthetase family. Glutamate--tRNA ligase type 1 subfamily. Monomer.

The protein resides in the cytoplasm. The catalysed reaction is tRNA(Glu) + L-glutamate + ATP = L-glutamyl-tRNA(Glu) + AMP + diphosphate. In terms of biological role, catalyzes the attachment of glutamate to tRNA(Glu) in a two-step reaction: glutamate is first activated by ATP to form Glu-AMP and then transferred to the acceptor end of tRNA(Glu). The polypeptide is Glutamate--tRNA ligase 1 (Ehrlichia chaffeensis (strain ATCC CRL-10679 / Arkansas)).